Reading from the N-terminus, the 417-residue chain is Hydroxysteroid dehydrogenase-like protein 2 (417 aa).

NADP(+)-binding positions include 17 to 23 (GASRGIG), Lys42, and Asp74. Catalysis depends on Tyr168, which acts as the Proton acceptor. Lys172 contacts NADP(+). An SCP2 domain is found at 306-414 (SSPLQETFKA…KLEKILGQMN (109 aa)).

The protein belongs to the short-chain dehydrogenases/reductases (SDR) family.

Its subcellular location is the peroxisome. The protein localises to the mitochondrion. Its function is as follows. Has apparently no steroid dehydrogenase activity. Might act as a metabolic regulator that affects systemic adaptation to nutritional cues. In Xenopus tropicalis (Western clawed frog), this protein is Hydroxysteroid dehydrogenase-like protein 2 (hsdl2).